Consider the following 954-residue polypeptide: Serine/threonine-protein kinase ste20 (954 aa).

A compositionally biased stretch (low complexity) spans 1–17 (MDGQLSLLSPTSSSSTS). 2 disordered regions span residues 1-165 (MDGQ…YDPL) and 203-316 (AAPA…RKKS). A compositionally biased stretch (basic residues) spans 18–28 (HSRKRLTKKQR). Composition is skewed to polar residues over residues 33-42 (NHRTSSSFNV), 57-75 (SASSLRQGPNCNQSPSLAR), and 100-121 (RSHTTRSQSANRPYNPTQTIPT). Low complexity-rich tracts occupy residues 127–136 (SPASSSQPQT), 143–153 (SAVASTTVTSS), and 203–214 (AAPAPTSTTTIA). Residues 224-234 (VAPPPPPPPPA) show a composition bias toward pro residues. Composition is skewed to low complexity over residues 245–256 (ARSSKPSKSPKS) and 265–277 (ASSFRHSASFSSA). In terms of domain architecture, CRIB spans 334-347 (ISAPENPVHVTHVG). Disordered regions lie at residues 440-562 (PMIS…VQAS) and 587-655 (QAMA…SNAI). Pro residues-rich tracts occupy residues 463–475 (RAPPPVPKGPGPL) and 514–527 (MPPPGDEAPMPYLP). A Protein kinase domain is found at 674-925 (YRGFTKIGQG…AHDLLRHDFM (252 aa)). ATP-binding positions include 680 to 688 (IGQGASGGV) and Lys703. Asp793 functions as the Proton acceptor in the catalytic mechanism.

This sequence belongs to the protein kinase superfamily. STE Ser/Thr protein kinase family. STE20 subfamily.

Its subcellular location is the cytoplasm. The protein resides in the nucleus. It catalyses the reaction L-seryl-[protein] + ATP = O-phospho-L-seryl-[protein] + ADP + H(+). It carries out the reaction L-threonyl-[protein] + ATP = O-phospho-L-threonyl-[protein] + ADP + H(+). MAP4K component of the MAPK pathway required for the mating pheromone response and the regulation of cell polarity and cell cycle. Phosphorylates histone H2B to form H2BS10ph. The polypeptide is Serine/threonine-protein kinase ste20 (stk-4) (Neurospora crassa (strain ATCC 24698 / 74-OR23-1A / CBS 708.71 / DSM 1257 / FGSC 987)).